A 105-amino-acid polypeptide reads, in one-letter code: Small ribosomal subunit protein uS10 (105 aa).

Belongs to the universal ribosomal protein uS10 family. In terms of assembly, part of the 30S ribosomal subunit.

In terms of biological role, involved in the binding of tRNA to the ribosomes. This is Small ribosomal subunit protein uS10 from Solidesulfovibrio magneticus (strain ATCC 700980 / DSM 13731 / RS-1) (Desulfovibrio magneticus).